The following is a 240-amino-acid chain: MMVAMIIENPLRGSYIERPNRFTVAVYVDGERRLAHLRDPGRLRELLIPGNDVILRKASSGNRKTEFDVIALRRDDEWVLVNSGFHSDLAASIIESSAVDEFRGFRIEKRECSFGRSRIDFLLASENERMLVEVKGCTLVRENLALFPDAPTERGRRHVEELERALSEGYHSSVLFLVFGRSARFFSPNHEMDPEFSSALRRAHEAGVNVIPYTLATDINEKVLVYPLRRIAVRWPGESP.

The protein belongs to the SfsA family.

This chain is Sugar fermentation stimulation protein homolog, found in Methanothermobacter thermautotrophicus (strain ATCC 29096 / DSM 1053 / JCM 10044 / NBRC 100330 / Delta H) (Methanobacterium thermoautotrophicum).